Consider the following 444-residue polypeptide: Glutamyl-tRNA reductase (444 aa).

Substrate contacts are provided by residues 49–52, serine 109, 114–116, and glutamine 120; these read TCNR and ETQ. The active-site Nucleophile is cysteine 50. 189-194 serves as a coordination point for NADP(+); the sequence is GAGKMG.

The protein belongs to the glutamyl-tRNA reductase family. Homodimer.

It catalyses the reaction (S)-4-amino-5-oxopentanoate + tRNA(Glu) + NADP(+) = L-glutamyl-tRNA(Glu) + NADPH + H(+). It functions in the pathway porphyrin-containing compound metabolism; protoporphyrin-IX biosynthesis; 5-aminolevulinate from L-glutamyl-tRNA(Glu): step 1/2. Catalyzes the NADPH-dependent reduction of glutamyl-tRNA(Glu) to glutamate 1-semialdehyde (GSA). This Bacillus cereus (strain ZK / E33L) protein is Glutamyl-tRNA reductase.